We begin with the raw amino-acid sequence, 579 residues long: Thiol:disulfide interchange protein DsbD (579 aa).

An N-terminal signal peptide occupies residues 1-16 (MKKLFLFFTLIFTAFA). 2 disulfide bridges follow: Cys124/Cys129 and Cys193/Cys315. The next 8 membrane-spanning stretches (helical) occupy residues 178–198 (IFGF…LPML), 230–250 (LTYT…QIAL), 254–274 (YVMI…FGLF), 296–316 (GAFG…SPCT), 337–357 (AVTL…ITLF), 376–396 (FGFV…PEVW), 397–417 (ESRL…LQMS), and 420–440 (GFGY…VQPL). Residues 449-579 (TTTQSAVENM…AFSNWIEKLL (131 aa)) form the Thioredoxin domain. Cys495 and Cys498 are disulfide-bonded.

Belongs to the thioredoxin family. DsbD subfamily.

The protein localises to the cell inner membrane. The enzyme catalyses [protein]-dithiol + NAD(+) = [protein]-disulfide + NADH + H(+). It carries out the reaction [protein]-dithiol + NADP(+) = [protein]-disulfide + NADPH + H(+). Required to facilitate the formation of correct disulfide bonds in some periplasmic proteins and for the assembly of the periplasmic c-type cytochromes. Acts by transferring electrons from cytoplasmic thioredoxin to the periplasm. This transfer involves a cascade of disulfide bond formation and reduction steps. The polypeptide is Thiol:disulfide interchange protein DsbD (Haemophilus influenzae (strain PittGG)).